The sequence spans 547 residues: Intercellular adhesion molecule 3 (547 aa).

Positions 1-29 (MATMVPSVLWPRACWTLLVCCLLTPGVQG) are cleaved as a signal peptide. Topologically, residues 30 to 485 (QEFLLRVEPQ…VMDIEAGSSH (456 aa)) are extracellular. In terms of domain architecture, Ig-like C2-type 1 spans 46 to 103 (GGSLFVNCSTDCPSSEKIALETSLSKELVASGMGWAAFNLSNVTGNSRILCSVYCNGS). N52, N84, N87, N101, N110, and N134 each carry an N-linked (GlcNAc...) asparagine glycan. Cystine bridges form between C53-C96 and C57-C100. Residues 132–197 (GQNFTLRCQV…FSCRTELDMQ (66 aa)) enclose the Ig-like C2-type 2 domain. An intrachain disulfide couples C139 to C190. N206, N264, N295, N308, N320, N363, N389, N453, and N457 each carry an N-linked (GlcNAc...) asparagine glycan. The 68-residue stretch at 234-301 (ETSWPVDCTL…IVCNVTLGGE (68 aa)) folds into the Ig-like C2-type 3 domain. The cysteines at positions 241 and 294 are disulfide-linked. The Ig-like C2-type 4 domain maps to 329 to 382 (GSTVTVSCMAGARVQVTLDGVPAAAPGQPAQLQLNATESDDGRSFFCSATLEVD). Residues C336 and C375 are joined by a disulfide bond. In terms of domain architecture, Ig-like C2-type 5 spans 416–469 (KTRHVLQCQARGNPYPELRCLKEGSSREVPVGIPFFVNVTHNGTYQCQASSSRG). C423 and C462 form a disulfide bridge. Residues 486 to 510 (FVPVFVAVLLTLGVVTIVLALMYVF) traverse the membrane as a helical segment. Residues 511 to 547 (REHQRSGSYHVREESTYLPLTSMQPTEAMGEEPSRAE) are Cytoplasmic-facing.

It belongs to the immunoglobulin superfamily. ICAM family. In terms of assembly, interacts with moesin/MSN. In terms of processing, upon stimulation by a physiologic stimuli becomes rapidly and transiently phosphorylated on serine residues. N-glycosylated; glycans consist of a mixture of tri- and tetra-antennary complex-type chains and high-mannose chains. In terms of tissue distribution, leukocytes.

It localises to the membrane. In terms of biological role, ICAM proteins are ligands for the leukocyte adhesion protein LFA-1 (integrin alpha-L/beta-2). ICAM3 is also a ligand for integrin alpha-D/beta-2. In association with integrin alpha-L/beta-2, contributes to apoptotic neutrophil phagocytosis by macrophages. The polypeptide is Intercellular adhesion molecule 3 (ICAM3) (Homo sapiens (Human)).